Here is a 274-residue protein sequence, read N- to C-terminus: SPbeta prophage-derived UPF0714 protein YoqZ (274 aa).

Belongs to the UPF0714 family.

The protein is SPbeta prophage-derived UPF0714 protein YoqZ (yoqZ) of Bacillus subtilis (strain 168).